Consider the following 139-residue polypeptide: MADKKSSPKKENPQDKTYAIVEASGKQFWLQPNRYYDFDRCQAEVDDVLTLENVLLLNDGKDLKLGKPYVKDAKVEIKVLEHRRGPKIIVYKMRPKKKTRRKNGHRQELTRVLVQSISIGSNTKKSKAVKTTASKVESE.

The protein belongs to the bacterial ribosomal protein bL21 family. In terms of assembly, part of the 50S ribosomal subunit. Contacts protein L20.

This protein binds to 23S rRNA in the presence of protein L20. The protein is Large ribosomal subunit protein bL21 of Prochlorococcus marinus (strain NATL2A).